The sequence spans 261 residues: uncharacterized protein (261 aa).

5 helical membrane-spanning segments follow: residues 38 to 58, 134 to 154, 163 to 183, 195 to 215, and 219 to 239; these read FIYL…ITLL, YTLM…LALI, ILIN…TYVL, YMGL…LFFL, and HKSV…CLKV.

The protein resides in the membrane. This is an uncharacterized protein from Dictyostelium discoideum (Social amoeba).